The primary structure comprises 136 residues: Small ribosomal subunit protein uS9 (136 aa).

Positions P103–A116 are enriched in basic and acidic residues. The disordered stretch occupies residues P103 to R136. The span at K117–R136 shows a compositional bias: basic residues.

Belongs to the universal ribosomal protein uS9 family.

The polypeptide is Small ribosomal subunit protein uS9 (rpsI) (Prochlorococcus marinus (strain SARG / CCMP1375 / SS120)).